We begin with the raw amino-acid sequence, 577 residues long: Maltase A1 (577 aa).

The signal sequence occupies residues 1-19 (MRPQSAACLLLAIVGFVGA). 2 N-linked (GlcNAc...) asparagine glycosylation sites follow: asparagine 119 and asparagine 151. Aspartate 221 functions as the Nucleophile in the catalytic mechanism. N-linked (GlcNAc...) asparagine glycosylation is present at asparagine 244. Catalysis depends on glutamate 297, which acts as the Proton donor. 2 N-linked (GlcNAc...) asparagine glycosylation sites follow: asparagine 315 and asparagine 331.

Belongs to the glycosyl hydrolase 13 family.

The enzyme catalyses Hydrolysis of terminal, non-reducing (1-&gt;4)-linked alpha-D-glucose residues with release of alpha-D-glucose.. This Drosophila melanogaster (Fruit fly) protein is Maltase A1 (Mal-A1).